Consider the following 250-residue polypeptide: tRNA pseudouridine synthase A (250 aa).

The Nucleophile role is filled by Asp52. Tyr110 lines the substrate pocket.

Belongs to the tRNA pseudouridine synthase TruA family. Homodimer.

It catalyses the reaction uridine(38/39/40) in tRNA = pseudouridine(38/39/40) in tRNA. In terms of biological role, formation of pseudouridine at positions 38, 39 and 40 in the anticodon stem and loop of transfer RNAs. The polypeptide is tRNA pseudouridine synthase A (Citrifermentans bemidjiense (strain ATCC BAA-1014 / DSM 16622 / JCM 12645 / Bem) (Geobacter bemidjiensis)).